The following is a 368-amino-acid chain: 4-hydroxy-3-methylbut-2-en-1-yl diphosphate synthase (flavodoxin) (368 aa).

Positions 271, 274, 306, and 313 each coordinate [4Fe-4S] cluster.

Belongs to the IspG family. [4Fe-4S] cluster serves as cofactor.

It catalyses the reaction (2E)-4-hydroxy-3-methylbut-2-enyl diphosphate + oxidized [flavodoxin] + H2O + 2 H(+) = 2-C-methyl-D-erythritol 2,4-cyclic diphosphate + reduced [flavodoxin]. Its pathway is isoprenoid biosynthesis; isopentenyl diphosphate biosynthesis via DXP pathway; isopentenyl diphosphate from 1-deoxy-D-xylulose 5-phosphate: step 5/6. In terms of biological role, converts 2C-methyl-D-erythritol 2,4-cyclodiphosphate (ME-2,4cPP) into 1-hydroxy-2-methyl-2-(E)-butenyl 4-diphosphate. The protein is 4-hydroxy-3-methylbut-2-en-1-yl diphosphate synthase (flavodoxin) of Haemophilus influenzae (strain ATCC 51907 / DSM 11121 / KW20 / Rd).